The chain runs to 121 residues: UPF0102 protein Hhal_2103 (121 aa).

The interval Met-1–Glu-20 is disordered. Over residues Asn-9–Glu-20 the composition is skewed to basic and acidic residues.

This sequence belongs to the UPF0102 family.

The protein is UPF0102 protein Hhal_2103 of Halorhodospira halophila (strain DSM 244 / SL1) (Ectothiorhodospira halophila (strain DSM 244 / SL1)).